The sequence spans 91 residues: MARTVFCEYLKQEAEGLDFQLYPGELGKRIFDSISKQAWSEWIKKQTMLVNEKKLSMMNAEHRKLLETEMVNFLFEGKEVQIEGYVPVEQK.

Belongs to the Fe(2+)-trafficking protein family.

Its function is as follows. Could be a mediator in iron transactions between iron acquisition and iron-requiring processes, such as synthesis and/or repair of Fe-S clusters in biosynthetic enzymes. In Actinobacillus pleuropneumoniae serotype 5b (strain L20), this protein is Probable Fe(2+)-trafficking protein.